The primary structure comprises 352 residues: MANFSESKSMMAVFFMFFLLLLSSSSSSSSSSPILKKIFIESPSYAPNAFTFDSTDKGFYTSVQDGRVIKYEGPNSGFTDFAYASPFWNKAFCENSTDPEKRPLCGRTYDISYDYKNSQMYIVDGHYHLCVVGKEGGYATQLATSVQGVPFKWLYAVTVDQRTGIVYFTDVSSIHDDSPEGVEEIMNTSDRTGRLMKYDPSTKETTLLLKELHVPGGAEISADGSFVVVAEFLSNRIVKYWLEGPKKGSAEFLVTIPNPGNIKRNSDGHFWVSSSEELDGGQHGRVVSRGIKFDGFGNILQVIPLPPPYEGEHFEQIQEHDGLLYIGSLFHSSVGILVYDDHDNKGNSYVSS.

The N-terminal stretch at 1 to 31 is a signal peptide; sequence MANFSESKSMMAVFFMFFLLLLSSSSSSSSS. N-linked (GlcNAc...) asparagine glycans are attached at residues Asn-95 and Asn-187.

The protein belongs to the strictosidine synthase family. As to quaternary structure, monomer.

The protein resides in the vacuole. It carries out the reaction 3alpha(S)-strictosidine + H2O = secologanin + tryptamine. It functions in the pathway alkaloid biosynthesis; 3alpha(S)-strictosidine biosynthesis; 3alpha(S)-strictosidine from secologanin and tryptamine: step 1/1. In terms of biological role, catalyzes the stereospecific condensation of tryptamine with secologanin to form strictosidine, the key intermediate of indole alkaloid biosynthesis. This chain is Strictosidine synthase (STR1), found in Catharanthus roseus (Madagascar periwinkle).